The following is a 305-amino-acid chain: Translation initiation factor eIF2B subunit alpha (305 aa).

Belongs to the eIF-2B alpha/beta/delta subunits family. Component of the translation initiation factor 2B (eIF2B) complex which is a heterodecamer of two sets of five different subunits: alpha, beta, gamma, delta and epsilon. Subunits alpha, beta and delta comprise a regulatory subcomplex and subunits epsilon and gamma comprise a catalytic subcomplex. Within the complex, the hexameric regulatory complex resides at the center, with the two heterodimeric catalytic subcomplexes bound on opposite sides.

It is found in the cytoplasm. It localises to the cytosol. Acts as a component of the translation initiation factor 2B (eIF2B) complex, which catalyzes the exchange of GDP for GTP on eukaryotic initiation factor 2 (eIF2) gamma subunit. Its guanine nucleotide exchange factor activity is repressed when bound to eIF2 complex phosphorylated on the alpha subunit, thereby limiting the amount of methionyl-initiator methionine tRNA available to the ribosome and consequently global translation is repressed. The chain is Translation initiation factor eIF2B subunit alpha from Caenorhabditis elegans.